We begin with the raw amino-acid sequence, 35 residues long: MEVNILAVIATALFIIIPTSFLLILYVKTASQADS.

The chain crosses the membrane as a helical span at residues I5–L25.

This sequence belongs to the PsbM family. PSII is composed of 1 copy each of membrane proteins PsbA, PsbB, PsbC, PsbD, PsbE, PsbF, PsbH, PsbI, PsbJ, PsbK, PsbL, PsbM, PsbT, PsbX, PsbY, PsbZ, Psb30/Ycf12, at least 3 peripheral proteins of the oxygen-evolving complex and a large number of cofactors. It forms dimeric complexes.

It localises to the plastid. It is found in the chloroplast thylakoid membrane. In terms of biological role, one of the components of the core complex of photosystem II (PSII). PSII is a light-driven water:plastoquinone oxidoreductase that uses light energy to abstract electrons from H(2)O, generating O(2) and a proton gradient subsequently used for ATP formation. It consists of a core antenna complex that captures photons, and an electron transfer chain that converts photonic excitation into a charge separation. This subunit is found at the monomer-monomer interface. The polypeptide is Photosystem II reaction center protein M (Staurastrum punctulatum (Green alga)).